Consider the following 317-residue polypeptide: Pantothenate kinase (317 aa).

ATP is bound at residue 99 to 106 (GSVSVGKS).

The protein belongs to the prokaryotic pantothenate kinase family.

It localises to the cytoplasm. It carries out the reaction (R)-pantothenate + ATP = (R)-4'-phosphopantothenate + ADP + H(+). Its pathway is cofactor biosynthesis; coenzyme A biosynthesis; CoA from (R)-pantothenate: step 1/5. This chain is Pantothenate kinase, found in Histophilus somni (strain 129Pt) (Haemophilus somnus).